A 110-amino-acid chain; its full sequence is Cysteine-rich and transmembrane domain-containing protein 1 (110 aa).

Positions 1 to 18 are enriched in pro residues; sequence MNYENPPPYASPPAPYPP. A disordered region spans residues 1-45; that stretch reads MNYENPPPYASPPAPYPPYGQQQPSYPVPNQYPGNPPGPVGYQPA. The segment covering 19–29 has biased composition (low complexity); it reads YGQQQPSYPVP. The helical transmembrane segment at 87–104 threads the bilayer; sequence SGESACLTACWTALCCCC.

Belongs to the CYSTM1 family.

It localises to the membrane. The protein is Cysteine-rich and transmembrane domain-containing protein 1 (cystm1) of Xenopus tropicalis (Western clawed frog).